Here is a 397-residue protein sequence, read N- to C-terminus: Elongation factor Tu (397 aa).

The 198-residue stretch at 10-207 (KPHCNIGTIG…AVDEWIPQPE (198 aa)) folds into the tr-type G domain. Residues 19-26 (GHVDHGKT) form a G1 region. 19-26 (GHVDHGKT) contributes to the GTP binding site. Thr26 contributes to the Mg(2+) binding site. The tract at residues 61–65 (GITIS) is G2. The G3 stretch occupies residues 82–85 (DCPG). GTP contacts are provided by residues 82-86 (DCPGH) and 137-140 (NKVD). The interval 137–140 (NKVD) is G4. The interval 175–177 (SAL) is G5.

The protein belongs to the TRAFAC class translation factor GTPase superfamily. Classic translation factor GTPase family. EF-Tu/EF-1A subfamily. Monomer.

It is found in the cytoplasm. It carries out the reaction GTP + H2O = GDP + phosphate + H(+). Its function is as follows. GTP hydrolase that promotes the GTP-dependent binding of aminoacyl-tRNA to the A-site of ribosomes during protein biosynthesis. This is Elongation factor Tu from Sphingopyxis alaskensis (strain DSM 13593 / LMG 18877 / RB2256) (Sphingomonas alaskensis).